Consider the following 156-residue polypeptide: SsrA-binding protein (156 aa).

Residues 135–150 (KRDTIKDREWQRDRSR) show a composition bias toward basic and acidic residues. A disordered region spans residues 135–156 (KRDTIKDREWQRDRSRIMKKNT).

This sequence belongs to the SmpB family.

Its subcellular location is the cytoplasm. Its function is as follows. Required for rescue of stalled ribosomes mediated by trans-translation. Binds to transfer-messenger RNA (tmRNA), required for stable association of tmRNA with ribosomes. tmRNA and SmpB together mimic tRNA shape, replacing the anticodon stem-loop with SmpB. tmRNA is encoded by the ssrA gene; the 2 termini fold to resemble tRNA(Ala) and it encodes a 'tag peptide', a short internal open reading frame. During trans-translation Ala-aminoacylated tmRNA acts like a tRNA, entering the A-site of stalled ribosomes, displacing the stalled mRNA. The ribosome then switches to translate the ORF on the tmRNA; the nascent peptide is terminated with the 'tag peptide' encoded by the tmRNA and targeted for degradation. The ribosome is freed to recommence translation, which seems to be the essential function of trans-translation. This is SsrA-binding protein from Legionella pneumophila (strain Paris).